The following is a 230-amino-acid chain: Ribonuclease 3 (230 aa).

The RNase III domain occupies valine 6 to glycine 135. Glutamate 48 provides a ligand contact to Mg(2+). Aspartate 52 is a catalytic residue. Positions 121 and 124 each coordinate Mg(2+). Residue glutamate 124 is part of the active site. The DRBM domain maps to aspartate 161–alanine 230.

It belongs to the ribonuclease III family. Homodimer. Mg(2+) is required as a cofactor.

Its subcellular location is the cytoplasm. The enzyme catalyses Endonucleolytic cleavage to 5'-phosphomonoester.. Functionally, digests double-stranded RNA. Involved in the processing of primary rRNA transcript to yield the immediate precursors to the large and small rRNAs (23S and 16S). Processes some mRNAs, and tRNAs when they are encoded in the rRNA operon. Processes pre-crRNA and tracrRNA of type II CRISPR loci if present in the organism. This is Ribonuclease 3 from Latilactobacillus sakei subsp. sakei (strain 23K) (Lactobacillus sakei subsp. sakei).